The primary structure comprises 206 residues: Thymidylate kinase (206 aa).

10–17 (GVDGVGKT) provides a ligand contact to ATP.

It belongs to the thymidylate kinase family.

It catalyses the reaction dTMP + ATP = dTDP + ADP. Its function is as follows. Phosphorylation of dTMP to form dTDP in both de novo and salvage pathways of dTTP synthesis. This chain is Thymidylate kinase, found in Bifidobacterium longum (strain NCC 2705).